Consider the following 296-residue polypeptide: Probable endonuclease 4 (296 aa).

Residues histidine 68, histidine 108, glutamate 145, aspartate 179, histidine 182, histidine 216, aspartate 229, histidine 231, and glutamate 261 each contribute to the Zn(2+) site.

The protein belongs to the AP endonuclease 2 family. The cofactor is Zn(2+).

The catalysed reaction is Endonucleolytic cleavage to 5'-phosphooligonucleotide end-products.. In terms of biological role, endonuclease IV plays a role in DNA repair. It cleaves phosphodiester bonds at apurinic or apyrimidinic (AP) sites, generating a 3'-hydroxyl group and a 5'-terminal sugar phosphate. This is Probable endonuclease 4 from Geobacter sulfurreducens (strain ATCC 51573 / DSM 12127 / PCA).